The primary structure comprises 241 residues: MSNFAVSLPEVIAVLPAAGIGSRMLVDCPKQYLTVGGKTIIEHAIFSLLHHPRIQRVIVVIHPQDTQFSRLSVAQDPRISTVYGGDQRANSVMAGLQLAGQAEWVLVHDAARPCLHLDDLSRLLSITECSQVGGILAAPVRDTMKRAEPGIQAIAHTVDRQDLWHALTPQLFPLELLKLCLSRALREGVAVTDEASALEHCGYHPILVTGRSDNIKVTRPEDLALAEFYLTQRQSLNNDSL.

Belongs to the IspD/TarI cytidylyltransferase family. IspD subfamily. As to quaternary structure, homodimer.

It carries out the reaction 2-C-methyl-D-erythritol 4-phosphate + CTP + H(+) = 4-CDP-2-C-methyl-D-erythritol + diphosphate. It participates in isoprenoid biosynthesis; isopentenyl diphosphate biosynthesis via DXP pathway; isopentenyl diphosphate from 1-deoxy-D-xylulose 5-phosphate: step 2/6. Catalyzes the formation of 4-diphosphocytidyl-2-C-methyl-D-erythritol from CTP and 2-C-methyl-D-erythritol 4-phosphate (MEP). This chain is 2-C-methyl-D-erythritol 4-phosphate cytidylyltransferase, found in Yersinia pestis.